Reading from the N-terminus, the 130-residue chain is Peptide methionine sulfoxide reductase MsrB (130 aa).

The MsrB domain occupies 8–130 (LEEWRSMLDP…NSVCLDLVPR (123 aa)). Residues cysteine 47, cysteine 50, cysteine 96, and cysteine 99 each coordinate Zn(2+). The active-site Nucleophile is the cysteine 119.

It belongs to the MsrB Met sulfoxide reductase family. It depends on Zn(2+) as a cofactor.

It catalyses the reaction L-methionyl-[protein] + [thioredoxin]-disulfide + H2O = L-methionyl-(R)-S-oxide-[protein] + [thioredoxin]-dithiol. This chain is Peptide methionine sulfoxide reductase MsrB, found in Pseudomonas fluorescens (strain ATCC BAA-477 / NRRL B-23932 / Pf-5).